The sequence spans 306 residues: Probable zinc metalloprotease VDBG_06923 (306 aa).

Positions 1 to 28 are cleaved as a signal peptide; the sequence is MNYEAEQPGANDDASGVAVALELARVLA. Asp-12 and Glu-45 together coordinate Zn(2+). The N-linked (GlcNAc...) asparagine glycan is linked to Asn-60. Asp-72 contacts Zn(2+). Positions 218–306 constitute a Fibronectin type-III domain; sequence APAKVNNVRV…KSPVTIPFPT (89 aa). N-linked (GlcNAc...) asparagine glycosylation is found at Asn-228, Asn-234, and Asn-244.

Belongs to the peptidase M28 family. M28B subfamily. It depends on Zn(2+) as a cofactor.

It localises to the secreted. This Verticillium alfalfae (strain VaMs.102 / ATCC MYA-4576 / FGSC 10136) (Verticillium wilt of alfalfa) protein is Probable zinc metalloprotease VDBG_06923.